Reading from the N-terminus, the 73-residue chain is Ocellatin-PT6 (73 aa).

The N-terminal stretch at 1 to 22 is a signal peptide; sequence MAFLKKSLFLVLFLGLVSLSIC. A propeptide spanning residues 23–39 is cleaved from the precursor; sequence DEEKRQDEDDDDDDDEE.

Expressed by the skin glands.

It is found in the secreted. In terms of biological role, has antibacterial activity against Gram-negative bacterium E.coli ATCC 25922 (MIC=120 uM) but not against S.pneumoniae ATCC 700603, S.choleraesuis ATCC 14028 or against Gram-positive bacterium S.aureus ATCC 29313. Shows no hemolytic activity and no cytotoxicity. This Leptodactylus pustulatus (Ceara white-lipped frog) protein is Ocellatin-PT6.